Here is a 216-residue protein sequence, read N- to C-terminus: Capsule polysaccharide export ATP-binding protein CtrD (216 aa).

Residues 2–215 (ISVEHVSKRY…DKAYEYYNSL (214 aa)) enclose the ABC transporter domain. 38 to 45 (GRNGAGKS) provides a ligand contact to ATP.

This sequence belongs to the ABC transporter superfamily.

The protein localises to the cell inner membrane. The catalysed reaction is ATP + H2O + capsular polysaccharide-[capsular polysaccharide-binding protein]Side 1 = ADP + phosphate + capsular polysaccharideSide 2 + [capsular polysaccharide-binding protein]Side 1.. Its function is as follows. Putative ATP-binding protein, and an energy-coupling component of capsule polysaccharide export apparatus. This is Capsule polysaccharide export ATP-binding protein CtrD (ctrD) from Neisseria meningitidis serogroup B (strain ATCC BAA-335 / MC58).